The sequence spans 326 residues: High-affinity zinc uptake system protein ZnuA (326 aa).

Residues 1–22 (MIRPSSLVLAAALGTAALPARA) form the signal peptide. Histidine 59 is a Zn(2+) binding site. Over residues 117–155 (GGEHEHEHEHEHEHEHEHEHDGHGHAEEQAHHDHDHSGT) the composition is skewed to basic and acidic residues. A disordered region spans residues 117–161 (GGEHEHEHEHEHEHEHEHEHDGHGHAEEQAHHDHDHSGTDPHAWL). Residues histidine 158, histidine 222, and aspartate 295 each coordinate Zn(2+). Cysteine 267 and cysteine 322 form a disulfide bridge.

It belongs to the bacterial solute-binding protein 9 family. In terms of assembly, monomer.

The protein resides in the periplasm. In terms of biological role, part of the ATP-binding cassette (ABC) transport system ZnuABC involved in zinc import. Binds zinc with high affinity and specificity and delivers it to the membrane permease for translocation into the cytoplasm. The sequence is that of High-affinity zinc uptake system protein ZnuA from Paracoccus denitrificans (strain Pd 1222).